The following is a 166-amino-acid chain: Arginine repressor (166 aa).

This sequence belongs to the ArgR family.

Its subcellular location is the cytoplasm. It participates in amino-acid biosynthesis; L-arginine biosynthesis [regulation]. Functionally, regulates arginine biosynthesis genes. The chain is Arginine repressor from Mycobacterium ulcerans (strain Agy99).